The primary structure comprises 334 residues: Coiled-coil domain-containing protein 89 (334 aa).

A coiled-coil region spans residues 75–318 (EAAQRFQSER…EAYKKHSGDL (244 aa)).

The protein belongs to the CCDC89 family. In terms of assembly, interacts (via C-terminus) with hey1/bc8 (via Orange domain). In terms of tissue distribution, in adults, expressed at varying levels in different organs including the liver and brain, with highest expression in the testis.

The protein resides in the cytoplasm. The protein localises to the nucleus. This is Coiled-coil domain-containing protein 89 from Xenopus laevis (African clawed frog).